We begin with the raw amino-acid sequence, 614 residues long: FAD-dependent monooxygenase terD (614 aa).

The N-terminal stretch at 1–23 is a signal peptide; the sequence is MSSKFDVVICGSGTAGLAAATWL. Residues 6–35, Gln44, Val137, and 239–241 contribute to the FAD site; these read DVVI…ILES and RVY. Asn260 is a glycosylation site (N-linked (GlcNAc...) asparagine). Residues Tyr282 and Asp303 each coordinate FAD. An N-linked (GlcNAc...) asparagine glycan is attached at Asn317. FAD is bound at residue Ser319. Asn602 carries an N-linked (GlcNAc...) asparagine glycan.

The protein belongs to the PheA/TfdB FAD monooxygenase family. Requires FAD as cofactor.

It participates in secondary metabolite biosynthesis. FAD-dependent monooxygenase; part of the gene cluster that mediates the biosynthesis of terrein, a fungal metabolite with ecological, antimicrobial, antiproliferative, and antioxidative activities. The first step in the pathway is performed by the polyketide synthase terA that produces 4-hydroxy-6-methylpyranon (4-HMP), orsellinic acid (OA), and 2,3-dehydro-6-hydroxymellein (2,3-dehydro-6-HM) by condensing acetyl-CoA with two, three, or four malonyl-CoA units, respectively. 4-HMP and OA are not pathway intermediates, but are rather shunt or side products. 2,3-dehydro-6-HM is further converted to 6-hydroxymellein (6-HM) by the 6-hydroxymellein synthase terB. The monooxygenases terC and terD, the multicopper oxidase terE and the Kelch-like protein terF are then involved in the transformation of 6-HM to terrein. Even if they are co-regulated with the other terrein cluster genes, terH and terI seem to be dispensable for terrein production; whereas one or both of the 2 transporters terG and terJ are probably required for efficient secretion of metabolites. This is FAD-dependent monooxygenase terD from Aspergillus terreus (strain NIH 2624 / FGSC A1156).